Consider the following 370-residue polypeptide: Alpha-ketoglutarate-dependent dioxygenase cnsP (370 aa).

Residues 1–12 (MSTTTVITPGTI) are compositionally biased toward low complexity. The interval 1-20 (MSTTTVITPGTITREKNENG) is disordered. His131 contacts substrate. Fe cation is bound by residues His169 and Asp171. Thr197 contributes to the 2-oxoglutarate binding site. Fe cation is bound at residue His321. The 2-oxoglutarate site is built by Arg333 and Arg337. Arg337 is a binding site for substrate.

It belongs to the TfdA dioxygenase family. Fe(2+) is required as a cofactor.

The protein operates within alkaloid biosynthesis. Alpha-ketoglutarate-dependent dioxygenase; part of the gene cluster that mediates the biosynthesis of communesins, a prominent class of indole alkaloids with great potential as pharmaceuticals. Communesins are biosynthesized by the coupling of tryptamine and aurantioclavine, two building blocks derived from L-tryptophan. The L-tryptophan decarboxylase cnsB converts L-tryptophan to tryptamine, whereas the tryptophan dimethylallyltransferase cnsF converts L-tryptophan to 4-dimethylallyl tryptophan which is further transformed to aurantioclavine by the aurantioclavine synthase cnsA, probably aided by the catalase cnsD. The cytochrome P450 monooxygenase cnsC catalyzes the heterodimeric coupling between the two different indole moieties, tryptamine and aurantioclavine, to construct vicinal quaternary stereocenters and yield the heptacyclic communesin scaffold. The O-methyltransferase cnsE then methylates the communesin scaffold to produce communesin K, the simplest characterized communesin that contains the heptacyclic core. The dioxygenase cnsJ converts communesin K into communesin I. Acylation to introduce the hexadienyl group at position N16 of communesin I by the acyltransferase cnsK leads to the production of communesin B. The hexadienyl group is produced by the highly reducing polyketide synthase cnsI, before being hydrolytically removed from cnsI by the serine hydrolase cnsH, converted into hexadienyl-CoA by the CoA ligase cnsG, and then transferred to communesin I by cnsK. Surprisingly, cnsK may also be a promiscuous acyltransferase that can tolerate a range of acyl groups, including acetyl-, propionyl-, and butyryl-CoA, which lead to communesins A, G and H respectively. The roles of the alpha-ketoglutarate-dependent dioxygenases cnsM and cnsP have still to be determined. The polypeptide is Alpha-ketoglutarate-dependent dioxygenase cnsP (Penicillium expansum (Blue mold rot fungus)).